A 218-amino-acid chain; its full sequence is Calcineurin B-like protein 5 (218 aa).

EF-hand domains follow at residues 35-69 (EVEA…FRNK), 70-105 (KTNL…FHPD), 107-142 (PEEQ…LLDE), and 151-186 (AVEM…NPYV).

This sequence belongs to the calcineurin regulatory subunit family. As to quaternary structure, homodimer. In terms of tissue distribution, expressed at low levels in roots, shoots, culms, leaves and young spikelets.

Acts as a calcium sensor. CBL proteins interact with CIPK serine-threonine protein kinases. Binding of a CBL protein to the regulatory NAF domain of a CIPK protein lead to the activation of the kinase in a calcium-dependent manner. The polypeptide is Calcineurin B-like protein 5 (CBL5) (Oryza sativa subsp. japonica (Rice)).